Consider the following 441-residue polypeptide: Ribosomal protein uS12 methylthiotransferase RimO (441 aa).

Positions 7–117 (PKISFVSLGC…VLEAVHRAKP (111 aa)) constitute an MTTase N-terminal domain. Residues cysteine 16, cysteine 52, cysteine 81, cysteine 148, cysteine 152, and cysteine 155 each coordinate [4Fe-4S] cluster. Residues 134 to 371 (LTPRHYAYLK…MARQQVISAR (238 aa)) enclose the Radical SAM core domain. The region spanning 374–440 (KRKVGTRQQI…AYDLHGTVAG (67 aa)) is the TRAM domain.

This sequence belongs to the methylthiotransferase family. RimO subfamily. The cofactor is [4Fe-4S] cluster.

It localises to the cytoplasm. The enzyme catalyses L-aspartate(89)-[ribosomal protein uS12]-hydrogen + (sulfur carrier)-SH + AH2 + 2 S-adenosyl-L-methionine = 3-methylsulfanyl-L-aspartate(89)-[ribosomal protein uS12]-hydrogen + (sulfur carrier)-H + 5'-deoxyadenosine + L-methionine + A + S-adenosyl-L-homocysteine + 2 H(+). Catalyzes the methylthiolation of an aspartic acid residue of ribosomal protein uS12. This is Ribosomal protein uS12 methylthiotransferase RimO from Rhodopseudomonas palustris (strain BisB5).